The primary structure comprises 193 residues: MKTLIRPLVVIFVVLTAVTGLAYPAVMTVFGQAVFPSQANGSLIEKDGRAVGSALIGQPFDAPKYFWGRLSATSPMPYNASGSGGSNLGPLNPSLAEQVKARIAALRDAGTDMSTPVPVDLVTASASGLDPEITPAAAAYQVERVAKARNLSADAVAQLVAANTAGRQFGVLGEPRVNVLKLNLALDAAQAAH.

Residues 7–27 (PLVVIFVVLTAVTGLAYPAVM) form a helical membrane-spanning segment.

This sequence belongs to the KdpC family. In terms of assembly, the system is composed of three essential subunits: KdpA, KdpB and KdpC.

The protein resides in the cell inner membrane. Functionally, part of the high-affinity ATP-driven potassium transport (or Kdp) system, which catalyzes the hydrolysis of ATP coupled with the electrogenic transport of potassium into the cytoplasm. This subunit acts as a catalytic chaperone that increases the ATP-binding affinity of the ATP-hydrolyzing subunit KdpB by the formation of a transient KdpB/KdpC/ATP ternary complex. In Burkholderia ambifaria (strain ATCC BAA-244 / DSM 16087 / CCUG 44356 / LMG 19182 / AMMD) (Burkholderia cepacia (strain AMMD)), this protein is Potassium-transporting ATPase KdpC subunit.